Here is a 203-residue protein sequence, read N- to C-terminus: Outer-membrane lipoprotein LolB (203 aa).

Positions 1 to 20 are cleaved as a signal peptide; it reads MNRSRRLALLCLGVPLLLQA. Residue Cys21 is the site of N-palmitoyl cysteine attachment. A lipid anchor (S-diacylglycerol cysteine) is attached at Cys21.

It belongs to the LolB family. As to quaternary structure, monomer.

It is found in the cell outer membrane. Functionally, plays a critical role in the incorporation of lipoproteins in the outer membrane after they are released by the LolA protein. This Cupriavidus taiwanensis (strain DSM 17343 / BCRC 17206 / CCUG 44338 / CIP 107171 / LMG 19424 / R1) (Ralstonia taiwanensis (strain LMG 19424)) protein is Outer-membrane lipoprotein LolB.